The chain runs to 377 residues: Nitric oxide reductase FlRd-NAD(+) reductase (377 aa).

The protein belongs to the FAD-dependent oxidoreductase family. The cofactor is FAD.

It localises to the cytoplasm. It catalyses the reaction 2 reduced [nitric oxide reductase rubredoxin domain] + NAD(+) + H(+) = 2 oxidized [nitric oxide reductase rubredoxin domain] + NADH. Its pathway is nitrogen metabolism; nitric oxide reduction. One of at least two accessory proteins for anaerobic nitric oxide (NO) reductase. Reduces the rubredoxin moiety of NO reductase. The polypeptide is Nitric oxide reductase FlRd-NAD(+) reductase (Escherichia coli O81 (strain ED1a)).